Consider the following 159-residue polypeptide: MLQTRLGLGALRQGRLLFAVKSFSTTSVAKIFPPPPQTIKGTVNDAAVFPHHSKLHGSYHWDFERIIAIAMVPQVMIPLFTGTSHPLMDAALACTLITHAHLGFESCVIDYFPARRFKKLSPLMHWILRGCTVLTLIGVYEFNTNDIGLTEGIKKLWKS.

A mitochondrion-targeting transit peptide spans methionine 1–lysine 30. At isoleucine 31–arginine 65 the chain is on the mitochondrial matrix side. Residues isoleucine 66–glycine 82 form a helical membrane-spanning segment. Residues threonine 83–aspartate 89 lie on the Mitochondrial intermembrane side of the membrane. Residues alanine 90–isoleucine 109 form a helical membrane-spanning segment. Histidine 99 contacts heme. Topologically, residues aspartate 110–proline 122 are mitochondrial matrix. A ubiquinone is bound at residue tyrosine 111. A helical membrane pass occupies residues leucine 123–tyrosine 140. The Mitochondrial intermembrane segment spans residues glutamate 141 to serine 159.

The protein belongs to the CybS family. Forms part of complex II containing four subunits: a flavoprotein (FP), an iron-sulfur protein (IP) and a cytochrome b composed of a large and a small subunit.

It localises to the mitochondrion inner membrane. It functions in the pathway carbohydrate metabolism; tricarboxylic acid cycle. In terms of biological role, membrane-anchoring subunit of succinate dehydrogenase (SDH) that is involved in complex II of the mitochondrial electron transport chain and is responsible for transferring electrons from succinate to ubiquinone (coenzyme Q). The sequence is that of Succinate dehydrogenase [ubiquinone] cytochrome b small subunit, mitochondrial (sdh4) from Schizosaccharomyces pombe (strain 972 / ATCC 24843) (Fission yeast).